A 492-amino-acid chain; its full sequence is Adenosylhomocysteinase (492 aa).

Substrate contacts are provided by threonine 68, aspartate 153, and glutamate 215. 216-218 (TTT) lines the NAD(+) pocket. 2 residues coordinate substrate: lysine 245 and aspartate 249. NAD(+) is bound by residues asparagine 250, 279–284 (GYGDVG), glutamate 302, asparagine 337, 358–360 (IGH), and asparagine 406.

The protein belongs to the adenosylhomocysteinase family. The cofactor is NAD(+).

Its subcellular location is the cytoplasm. It carries out the reaction S-adenosyl-L-homocysteine + H2O = L-homocysteine + adenosine. It participates in amino-acid biosynthesis; L-homocysteine biosynthesis; L-homocysteine from S-adenosyl-L-homocysteine: step 1/1. In terms of biological role, may play a key role in the regulation of the intracellular concentration of adenosylhomocysteine. The sequence is that of Adenosylhomocysteinase from Mycobacterium marinum (strain ATCC BAA-535 / M).